The following is a 49-amino-acid chain: Light-harvesting protein B-875 beta chain (49 aa).

Residues 2 to 27 are Cytoplasmic-facing; the sequence is ADKSDLGYTGLTDEQAQELHSVYMSG. A bacteriochlorophyll contacts are provided by histidine 21 and histidine 39. A helical; Signal-anchor for type II membrane protein membrane pass occupies residues 28–45; it reads LWLFSAVAIVAHLAVYIW. Residues 46–49 are Periplasmic-facing; sequence RPWF.

Belongs to the antenna complex beta subunit family. The core complex is formed by different alpha and beta chains, binding bacteriochlorophyll molecules, and arranged most probably in tetrameric structures disposed around the reaction center. The non-pigmented gamma chains may constitute additional components.

The protein localises to the cell inner membrane. Functionally, antenna complexes are light-harvesting systems, which transfer the excitation energy to the reaction centers. In Cereibacter sphaeroides (strain ATCC 17023 / DSM 158 / JCM 6121 / CCUG 31486 / LMG 2827 / NBRC 12203 / NCIMB 8253 / ATH 2.4.1.) (Rhodobacter sphaeroides), this protein is Light-harvesting protein B-875 beta chain (pufB).